Consider the following 545-residue polypeptide: CTP synthase (545 aa).

Positions 1 to 266 (MTTKYIFVTG…DEICVKRFGL (266 aa)) are amidoligase domain. S14 is a binding site for CTP. S14 serves as a coordination point for UTP. Residues 15-20 (SLGKGI) and D72 contribute to the ATP site. The Mg(2+) site is built by D72 and E140. CTP is bound by residues 147 to 149 (DIE), 187 to 192 (KTKPTQ), and K223. UTP contacts are provided by residues 187–192 (KTKPTQ) and K223. 239–241 (RDV) contributes to the ATP binding site. The region spanning 291-542 (IIGMVGKYTE…IKSAIDHQQG (252 aa)) is the Glutamine amidotransferase type-1 domain. Residue G352 participates in L-glutamine binding. C379 acts as the Nucleophile; for glutamine hydrolysis in catalysis. L-glutamine contacts are provided by residues 380 to 383 (LGMQ), E403, and R470. Active-site residues include H515 and E517.

This sequence belongs to the CTP synthase family. In terms of assembly, homotetramer.

It catalyses the reaction UTP + L-glutamine + ATP + H2O = CTP + L-glutamate + ADP + phosphate + 2 H(+). The catalysed reaction is L-glutamine + H2O = L-glutamate + NH4(+). It carries out the reaction UTP + NH4(+) + ATP = CTP + ADP + phosphate + 2 H(+). The protein operates within pyrimidine metabolism; CTP biosynthesis via de novo pathway; CTP from UDP: step 2/2. Allosterically activated by GTP, when glutamine is the substrate; GTP has no effect on the reaction when ammonia is the substrate. The allosteric effector GTP functions by stabilizing the protein conformation that binds the tetrahedral intermediate(s) formed during glutamine hydrolysis. Inhibited by the product CTP, via allosteric rather than competitive inhibition. Functionally, catalyzes the ATP-dependent amination of UTP to CTP with either L-glutamine or ammonia as the source of nitrogen. Regulates intracellular CTP levels through interactions with the four ribonucleotide triphosphates. This is CTP synthase from Psychromonas ingrahamii (strain DSM 17664 / CCUG 51855 / 37).